The primary structure comprises 551 residues: Sialic acid-binding Ig-like lectin 5 (551 aa).

Residues methionine 1 to glutamine 16 form the signal peptide. At glutamate 17 to leucine 441 the chain is on the extracellular side. The 118-residue stretch at proline 19 to asparagine 136 folds into the Ig-like V-type domain. Disulfide bonds link cysteine 36–cysteine 170, cysteine 41–cysteine 101, and cysteine 164–cysteine 213. The N-linked (GlcNAc...) asparagine glycan is linked to asparagine 100. 3 residues coordinate N-acetylneuraminate: arginine 119, lysine 127, and serine 129. The Ig-like C2-type 1 domain occupies proline 146–glutamine 229. Residues aspartate 189–asparagine 210 are disordered. N-linked (GlcNAc...) asparagine glycosylation is found at asparagine 210, asparagine 231, and asparagine 253. Residues proline 236 to serine 330 form the Ig-like C2-type 2 domain. Cysteine 269 and cysteine 314 form a disulfide bridge. 4 N-linked (GlcNAc...) asparagine glycosylation sites follow: asparagine 328, asparagine 375, asparagine 384, and asparagine 393. A helical transmembrane segment spans residues glycine 442–valine 462. Residues lysine 463–lysine 551 are Cytoplasmic-facing. Residues alanine 469–lysine 551 are disordered. The short motif at leucine 518–leucine 523 is the ITIM motif element. Basic and acidic residues predominate over residues methionine 528–glutamate 537. Positions threonine 542–isoleucine 547 match the SLAM-like motif motif.

Belongs to the immunoglobulin superfamily. SIGLEC (sialic acid binding Ig-like lectin) family. Expressed by monocytic/myeloid lineage cells. Found at high levels in peripheral blood leukocytes, spleen, bone marrow and at lower levels in lymph node, lung, appendix, placenta, pancreas and thymus. Expressed by monocytes and neutrophils but absent from leukemic cell lines representing early stages of myelomonocytic differentiation.

The protein localises to the membrane. In terms of biological role, putative adhesion molecule that mediates sialic-acid dependent binding to cells. Binds equally to alpha-2,3-linked and alpha-2,6-linked sialic acid. The sialic acid recognition site may be masked by cis interactions with sialic acids on the same cell surface. In Homo sapiens (Human), this protein is Sialic acid-binding Ig-like lectin 5 (SIGLEC5).